The primary structure comprises 313 residues: Adhesin MafA 2/3 (313 aa).

Positions 1-14 (MKTLLLLIPLVLTA) are cleaved as a signal peptide. The N-palmitoyl cysteine moiety is linked to residue Cys-15. Cys-15 carries the S-diacylglycerol cysteine lipid modification. Residues 282–298 (GDTTAQNRPDFKQNNGK) show a composition bias toward polar residues. A disordered region spans residues 282–313 (GDTTAQNRPDFKQNNGKNPDVGNEVIRRRKGG).

Belongs to the MafA family.

It localises to the cell outer membrane. The polypeptide is Adhesin MafA 2/3 (mafA2) (Neisseria gonorrhoeae (strain ATCC 700825 / FA 1090)).